The primary structure comprises 1612 residues: DNA topoisomerase 2-beta (1612 aa).

Ala2 is modified (N-acetylalanine). The residue at position 3 (Lys3) is an N6-acetyllysine. Glycyl lysine isopeptide (Lys-Gly) (interchain with G-Cter in SUMO2) cross-links involve residues Lys21 and Lys22. Residues Asn100, Asn129, and Ser157–Asn159 each bind ATP. Residues Lys165 and Lys166 each participate in a glycyl lysine isopeptide (Lys-Gly) (interchain with G-Cter in SUMO2) cross-link. Gly170–Lys177 lines the ATP pocket. Glycyl lysine isopeptide (Lys-Gly) (interchain with G-Cter in SUMO2) cross-links involve residues Lys216 and Lys287. The tract at residues Lys351–Lys353 is interaction with DNA. Glycyl lysine isopeptide (Lys-Gly) (interchain with G-Cter in SUMO2) cross-links involve residues Lys355 and Lys361. Gln385–Lys387 contributes to the ATP binding site. Glycyl lysine isopeptide (Lys-Gly) (interchain with G-Cter in SUMO2) cross-links involve residues Lys425, Lys427, and Lys434. The Toprim domain maps to Cys464–Glu581. Positions 470, 550, and 552 each coordinate Mg(2+). Residues Lys588, Lys593, Lys623, Lys631, Lys634, Lys664, and Lys700 each participate in a glycyl lysine isopeptide (Lys-Gly) (interchain with G-Cter in SUMO2) cross-link. The Topo IIA-type catalytic domain occupies Ile724–Leu1177. Residue Tyr814 is the O-(5'-phospho-DNA)-tyrosine intermediate of the active site. The interaction with DNA stretch occupies residues Lys999 to Ser1008. Lys1080 is covalently cross-linked (Glycyl lysine isopeptide (Lys-Gly) (interchain with G-Cter in SUMO2)). The tract at residues Ala1098–Gly1128 is disordered. Residues Lys1202, Lys1205, Lys1214, and Lys1215 each participate in a glycyl lysine isopeptide (Lys-Gly) (interchain with G-Cter in SUMO2) cross-link. The residue at position 1224 (Ser1224) is a Phosphoserine. Residues Lys1238, Lys1250, and Lys1259 each participate in a glycyl lysine isopeptide (Lys-Gly) (interchain with G-Cter in SUMO2) cross-link. The interval Leu1245–Arg1586 is disordered. Thr1280 bears the Phosphothreonine mark. Residues Lys1311 and Lys1315 each participate in a glycyl lysine isopeptide (Lys-Gly) (interchain with G-Cter in SUMO2) cross-link. Composition is skewed to basic and acidic residues over residues Pro1322–Ser1332 and Ser1346–Tyr1358. Residues Ser1324, Ser1328, Ser1330, Ser1332, and Ser1346 each carry the phosphoserine modification. A Phosphotyrosine modification is found at Tyr1358. Acidic residues predominate over residues Phe1362–Leu1379. 2 positions are modified to phosphoserine: Ser1363 and Ser1376. Residue Lys1385 forms a Glycyl lysine isopeptide (Lys-Gly) (interchain with G-Cter in SUMO2) linkage. Ser1387 carries the post-translational modification Phosphoserine. Position 1390 is a phosphothreonine (Thr1390). Ser1400 bears the Phosphoserine mark. The residue at position 1408 (Tyr1408) is a Phosphotyrosine. Position 1411 is a phosphoserine (Ser1411). Basic and acidic residues predominate over residues Ala1417–Gln1429. Lys1427 participates in a covalent cross-link: Glycyl lysine isopeptide (Lys-Gly) (interchain with G-Cter in SUMO2). Ser1428, Ser1439, and Ser1441 each carry phosphoserine. Residue Lys1443 forms a Glycyl lysine isopeptide (Lys-Gly) (interchain with G-Cter in SUMO2) linkage. Residues Lys1443–Ser1453 are compositionally biased toward basic and acidic residues. Phosphoserine occurs at positions 1448, 1453, and 1460. Residue Lys1477 forms a Glycyl lysine isopeptide (Lys-Gly) (interchain with G-Cter in SUMO2) linkage. The interaction with PLSCR1 stretch occupies residues Lys1493–Lys1499. 3 positions are modified to phosphoserine: Ser1509, Ser1511, and Ser1513. Over residues Gly1526–Ala1536 the composition is skewed to basic residues. Phosphoserine is present on residues Ser1537 and Ser1539. Over residues Lys1550–Lys1561 the composition is skewed to basic residues. Thr1562 carries the post-translational modification Phosphothreonine. Phosphoserine is present on residues Ser1563 and Ser1568. Tyr1596 is modified (phosphotyrosine). Phosphoserine is present on Ser1600.

It belongs to the type II topoisomerase family. Homodimer. Interacts with KIAA1210. Interacts with PLSCR1. The cofactor is Mg(2+). Requires Mn(2+) as cofactor. Ca(2+) is required as a cofactor.

The protein localises to the nucleus. It localises to the nucleolus. The protein resides in the nucleoplasm. The enzyme catalyses ATP-dependent breakage, passage and rejoining of double-stranded DNA.. Key decatenating enzyme that alters DNA topology by binding to two double-stranded DNA molecules, generating a double-stranded break in one of the strands, passing the intact strand through the broken strand, and religating the broken strand. Plays a role in B-cell differentiation. The polypeptide is DNA topoisomerase 2-beta (Top2b) (Mus musculus (Mouse)).